The sequence spans 238 residues: ATP-dependent dethiobiotin synthetase BioD (238 aa).

Position 13–18 (13–18 (EIGKTV)) interacts with ATP. Mg(2+) is bound at residue Thr-17. Lys-38 is a catalytic residue. Thr-42 serves as a coordination point for substrate. Residues Arg-59 and Glu-111 each contribute to the Mg(2+) site. Residues 111–114 (EGAG), 175–176 (NQ), and 204–206 (PLL) each bind ATP.

The protein belongs to the dethiobiotin synthetase family. Homodimer. It depends on Mg(2+) as a cofactor.

It localises to the cytoplasm. The enzyme catalyses (7R,8S)-7,8-diammoniononanoate + CO2 + ATP = (4R,5S)-dethiobiotin + ADP + phosphate + 3 H(+). The protein operates within cofactor biosynthesis; biotin biosynthesis; biotin from 7,8-diaminononanoate: step 1/2. Functionally, catalyzes a mechanistically unusual reaction, the ATP-dependent insertion of CO2 between the N7 and N8 nitrogen atoms of 7,8-diaminopelargonic acid (DAPA, also called 7,8-diammoniononanoate) to form a ureido ring. This is ATP-dependent dethiobiotin synthetase BioD from Geobacillus kaustophilus (strain HTA426).